Here is a 407-residue protein sequence, read N- to C-terminus: 1-deoxy-D-xylulose 5-phosphate reductoisomerase (407 aa).

The NADPH site is built by Thr-25, Gly-26, Ser-27, Ile-28, Asn-53, and Asn-136. 1-deoxy-D-xylulose 5-phosphate is bound at residue Lys-137. Glu-138 provides a ligand contact to NADPH. Asp-162 is a binding site for Mn(2+). Residues Ser-163, Glu-164, Ser-188, and His-211 each coordinate 1-deoxy-D-xylulose 5-phosphate. Glu-164 lines the Mn(2+) pocket. Gly-217 serves as a coordination point for NADPH. 1-deoxy-D-xylulose 5-phosphate-binding residues include Ser-224, Asn-229, Lys-230, and Glu-233. Glu-233 provides a ligand contact to Mn(2+).

It belongs to the DXR family. The cofactor is Mg(2+). Mn(2+) is required as a cofactor.

It carries out the reaction 2-C-methyl-D-erythritol 4-phosphate + NADP(+) = 1-deoxy-D-xylulose 5-phosphate + NADPH + H(+). It functions in the pathway isoprenoid biosynthesis; isopentenyl diphosphate biosynthesis via DXP pathway; isopentenyl diphosphate from 1-deoxy-D-xylulose 5-phosphate: step 1/6. In terms of biological role, catalyzes the NADPH-dependent rearrangement and reduction of 1-deoxy-D-xylulose-5-phosphate (DXP) to 2-C-methyl-D-erythritol 4-phosphate (MEP). This is 1-deoxy-D-xylulose 5-phosphate reductoisomerase from Bradyrhizobium sp. (strain ORS 278).